We begin with the raw amino-acid sequence, 843 residues long: Axin-2 (843 aa).

Residues 1-75 (MSSAMLVTCL…EGRASPDSPL (75 aa)) are disordered. The Tankyrase-binding motif signature appears at 21–30 (APRPPVPGEE). The span at 56–69 (RRNEDGLGEPEGRA) shows a compositional bias: basic and acidic residues. Residues 81-200 (SLHSLLGDQD…LTSDIYLEYV (120 aa)) enclose the RGS domain. The tract at residues 327–413 (VGSKKQLQRE…REGSELTLNS (87 aa)) is interaction with GSK3B. An interaction with SIAH1 and SIAH2 region spans residues 334 to 393 (QREMHRSVKANGQVSLPHFPRTHRLPKEMTPVEPATFAAELISRLEKLKLELESRHSLEE). 4 disordered regions span residues 396-435 (QQIREDEEREGSELTLNSREGAPTQHPLSLLPSGSYEEDP), 447-494 (LKTP…AASP), 561-674 (APET…RTTP), and 718-748 (ASQQRDRNHSATVQTGATPFSNPSLAPEDHK). The interaction with beta-catenin stretch occupies residues 413–476 (SREGAPTQHP…PDHHHHHHSQ (64 aa)). Low complexity-rich tracts occupy residues 477–494 (YHSLLPPGGKLPPAAASP) and 588–597 (PGLALPAREG). The span at 727–741 (SATVQTGATPFSNPS) shows a compositional bias: polar residues. A DIX domain is found at 761 to 843 (ASELVVTYFF…RILGKVERID (83 aa)).

Interacts with glycogen synthase kinase-3 beta (GSK3B) and beta-catenin. The interaction between axin and beta-catenin occurs via the armadillo repeats contained in beta-catenin. Interacts with SMAD7 and RNF111. Interacts with ANKRD6. Interacts with SIAH1. Interacts with SIAH2. Post-translationally, probably phosphorylated by GSK3B and dephosphorylated by PP2A. ADP-ribosylated by tankyrase TNKS and TNKS2. Poly-ADP-ribosylated protein is recognized by RNF146, followed by ubiquitination and subsequent activation of the Wnt signaling pathway. In terms of processing, ubiquitinated by RNF146 when poly-ADP-ribosylated, leading to its degradation and subsequent activation of the Wnt signaling pathway. Deubiquitinated by USP34, deubiquitinated downstream of beta-catenin stabilization step: deubiquitination is important Wnt signaling to positively regulate beta-catenin (CTNBB1)-mediated transcription. In terms of tissue distribution, expressed in brain and lymphoblast.

The protein resides in the cytoplasm. Its function is as follows. Inhibitor of the Wnt signaling pathway. Down-regulates beta-catenin. Probably facilitate the phosphorylation of beta-catenin and APC by GSK3B. The protein is Axin-2 (AXIN2) of Homo sapiens (Human).